Here is a 503-residue protein sequence, read N- to C-terminus: Anthranilate synthase component 1 3 (503 aa).

269 to 271 (PYS) contributes to the L-tryptophan binding site. Residue 304–305 (GT) coordinates chorismate. Glu331 provides a ligand contact to Mg(2+). Chorismate is bound by residues Tyr419, Arg439, 453 to 455 (GSG), and Gly455. Glu468 is a binding site for Mg(2+).

Belongs to the anthranilate synthase component I family. In terms of assembly, tetramer of two components I and two components II. The cofactor is Mg(2+).

The catalysed reaction is chorismate + L-glutamine = anthranilate + pyruvate + L-glutamate + H(+). The protein operates within amino-acid biosynthesis; L-tryptophan biosynthesis; L-tryptophan from chorismate: step 1/5. The protein is Anthranilate synthase component 1 3 (trpE3) of Haloarcula marismortui (strain ATCC 43049 / DSM 3752 / JCM 8966 / VKM B-1809) (Halobacterium marismortui).